Reading from the N-terminus, the 135-residue chain is Probable disulfide formation protein (135 aa).

The chain crosses the membrane as a helical span at residues 7–26; the sequence is SYCLYLAWLFSCIGTLMSVY. A disulfide bridge connects residues Cys36 and Cys39. Helical transmembrane passes span 41-60 and 67-84; these read YQRI…AYRE and YTLP…YQVC. Cys96 and Cys101 are joined by a disulfide. A helical transmembrane segment spans residues 109–131; it reads GFITMPMASAAAFCAIACLLVLA.

This sequence belongs to the DsbB family. BdbC subfamily.

The protein resides in the cell inner membrane. Required for disulfide bond formation in some proteins. The polypeptide is Probable disulfide formation protein (Chlamydia trachomatis serovar D (strain ATCC VR-885 / DSM 19411 / UW-3/Cx)).